The sequence spans 260 residues: Small ribosomal subunit protein eS1 (260 aa).

Lys-30 is modified (N6-acetyllysine; alternate). A Glycyl lysine isopeptide (Lys-Gly) (interchain with G-Cter in SUMO2); alternate cross-link involves residue Lys-30. Lys-52 carries the post-translational modification N6-acetyllysine. Tyr-151 is modified (ADP-ribosyltyrosine). The disordered stretch occupies residues 228 to 260 (HGEGSSSGKATGDETGAKVERADGYEPPVQESV). A phosphoserine mark is found at Ser-232 and Ser-233. Residues 238–251 (TGDETGAKVERADG) show a composition bias toward basic and acidic residues. Position 245 is an N6-acetyllysine; alternate (Lys-245). Lys-245 participates in a covalent cross-link: Glycyl lysine isopeptide (Lys-Gly) (interchain with G-Cter in SUMO2); alternate. A Phosphotyrosine modification is found at Tyr-252. The residue at position 259 (Ser-259) is a Phosphoserine.

Belongs to the eukaryotic ribosomal protein eS1 family. Component of the small ribosomal subunit. Mature ribosomes consist of a small (40S) and a large (60S) subunit. The 40S subunit contains about 33 different proteins and 1 molecule of RNA (18S). The 60S subunit contains about 49 different proteins and 3 molecules of RNA (28S, 5.8S and 5S). Identified in a IGF2BP1-dependent mRNP granule complex containing untranslated mRNAs. Binds with high affinity to IPO4. Interacts with DDIT3. Part of the small subunit (SSU) processome, composed of more than 70 proteins and the RNA chaperone small nucleolar RNA (snoRNA) U3. In terms of processing, ADP-ribosylated at Tyr-151 by PARP1 in presence of HPF1.

It localises to the cytoplasm. Its subcellular location is the nucleus. It is found in the nucleolus. In terms of biological role, component of the small ribosomal subunit. The ribosome is a large ribonucleoprotein complex responsible for the synthesis of proteins in the cell. Part of the small subunit (SSU) processome, first precursor of the small eukaryotic ribosomal subunit. During the assembly of the SSU processome in the nucleolus, many ribosome biogenesis factors, an RNA chaperone and ribosomal proteins associate with the nascent pre-rRNA and work in concert to generate RNA folding, modifications, rearrangements and cleavage as well as targeted degradation of pre-ribosomal RNA by the RNA exosome. May play a role during erythropoiesis through regulation of transcription factor DDIT3. This chain is Small ribosomal subunit protein eS1, found in Felis catus (Cat).